An 876-amino-acid chain; its full sequence is AP-1 complex subunit gamma-1 (876 aa).

HEAT repeat units follow at residues 97-135, 136-173, 248-284, 308-345, 346-382, 384-417, 418-454, 506-545, and 560-599; these read DERQEVLMLVTNSLKQDLNHSNQYVVGLALCALGNICSA, EMARDLAPEVERLIQFRDPNIRKKAALCSTRIIRKVPD, FLHIRLLRLLRVLGQGDADASDLMTDILAQVATKTES, SLRVLAINILGRFLSNRDNNIRYVALNMLMKAITFDDQ, AVQRHRVTILECVKDPDASIRKRALELVTLLVNENNV, QLTKELIDYLEISDEDFKEDLSAKICFIVEKFSP, EKLWYIDQMLKVLCEAGKFVKDDVWHALIVVISNASE, VTESDAVDVIEDAITRHNSDSTTKAMALVALLKLSSRFPS, and SLLLEMQQRAIEYNSIVDRHKNIRSSLVDRMPVLDEATFN. Residues 756–873 form the GAE domain; the sequence is PAYAPIVAYE…LEEGQVSNFP (118 aa).

The protein belongs to the adaptor complexes large subunit family. As to quaternary structure, adaptor protein complex 1 (AP-1) is a heterotetramer composed of two large adaptins (gamma-type subunit and beta-type subunit), a medium adaptin (mu-type subunit) and a small adaptin (sigma-type subunit). Binds to EPSIN1. Interacts with DRP2A/ADL6 (via C-terminus).

The protein localises to the golgi apparatus. Its subcellular location is the cytoplasmic vesicle. It is found in the clathrin-coated vesicle membrane. Functionally, subunit of clathrin-associated adaptor protein complex 1 that plays a role in protein sorting at the trans-Golgi network and early endosomes (TGN/EE). The AP complexes mediate both the recruitment of clathrin to membranes and the recognition of sorting signals within the cytosolic tails of transmembrane cargo molecules. The sequence is that of AP-1 complex subunit gamma-1 (GAMMA-ADR) from Arabidopsis thaliana (Mouse-ear cress).